Consider the following 498-residue polypeptide: ATP synthase subunit beta, chloroplastic (498 aa).

172 to 179 is a binding site for ATP; it reads GGAGVGKT.

This sequence belongs to the ATPase alpha/beta chains family. F-type ATPases have 2 components, CF(1) - the catalytic core - and CF(0) - the membrane proton channel. CF(1) has five subunits: alpha(3), beta(3), gamma(1), delta(1), epsilon(1). CF(0) has four main subunits: a(1), b(1), b'(1) and c(9-12).

It localises to the plastid. The protein localises to the chloroplast thylakoid membrane. The catalysed reaction is ATP + H2O + 4 H(+)(in) = ADP + phosphate + 5 H(+)(out). In terms of biological role, produces ATP from ADP in the presence of a proton gradient across the membrane. The catalytic sites are hosted primarily by the beta subunits. In Lactuca sativa (Garden lettuce), this protein is ATP synthase subunit beta, chloroplastic.